A 564-amino-acid polypeptide reads, in one-letter code: Urocanate hydratase (564 aa).

NAD(+) is bound by residues 58–59 (GG), Q136, 182–184 (GMG), E202, R207, 245–246 (NA), 266–270 (QTSAH), 276–277 (YL), and Y325. The active site involves C413. Residue G495 participates in NAD(+) binding.

This sequence belongs to the urocanase family. NAD(+) serves as cofactor.

It is found in the cytoplasm. The catalysed reaction is 4-imidazolone-5-propanoate = trans-urocanate + H2O. Its pathway is amino-acid degradation; L-histidine degradation into L-glutamate; N-formimidoyl-L-glutamate from L-histidine: step 2/3. In terms of biological role, catalyzes the conversion of urocanate to 4-imidazolone-5-propionate. This is Urocanate hydratase from Vibrio atlanticus (strain LGP32) (Vibrio splendidus (strain Mel32)).